Reading from the N-terminus, the 275-residue chain is MANPTVIKLQDGNVMPQLGLGVWQASNEEVITAIQKALEVGYRSIDTAAAYKNEEGVGKALKNASVNREELFITTKLWNDDHKRPREALLDSLKKLQLDYIDLYLMHWPVPAIDHYVEAWKGMIELQKEGLIKSIGVCNFQIHHLQRLIDETGVTPVINQIELHPLMQQRQLHAWNATHKIQTESWSPLAQGGKGVFDQKVIRDLADKYGKTPAQIVIRWHLDSGLVVIPKSVTPSRIAENFDVWDFRLDKDELGEIAKLDQGKRLGPDPDQFGG.

Tyr51 functions as the Proton donor in the catalytic mechanism. His107 is a substrate binding site. 187 to 241 (SPLAQGGKGVFDQKVIRDLADKYGKTPAQIVIRWHLDSGLVVIPKSVTPSRIAEN) lines the NADP(+) pocket.

It belongs to the aldo/keto reductase family. In terms of assembly, monomer.

It is found in the cytoplasm. It catalyses the reaction hydroxyacetone + NADP(+) = methylglyoxal + NADPH + H(+). It carries out the reaction a primary alcohol + NADP(+) = an aldehyde + NADPH + H(+). The catalysed reaction is 2-dehydro-L-idonate + NADP(+) = 2,5-didehydro-D-gluconate + NADPH + H(+). Its function is as follows. Aldo-keto reductase that significantly contributes to cellular methylglyoxal detoxification by catalyzing the NADPH-dependent conversion of methylglyoxal to acetol. It also exhibits fairly high activity with glyoxal. Shows broad specificity and can use aromatic aldehydes such as 4-nitrobenzaldehyde, 3-nitrobenzaldehyde and benzaldehyde, and phenylglyoxal. Shows beta-keto ester reductase activity toward ethyl acetoacetate and a variety of 2-substituted derivatives. Also catalyzes the reduction of 2,5-diketo-D-gluconic acid (25DKG) to 2-keto-L-gulonic acid (2KLG) and could be involved in ketogluconate metabolism. However, the specific activity of the enzyme toward 2,5-diketo-D-gluconate was reported to be almost 400-fold lower than its activity toward methylglyoxal. Can catalyze in vitro the NADPH-dependent reduction of furfural, a natural product of lignocellulosic decomposition, to the less toxic product, furfuryl alcohol. However, it is unlikely that furfural is a physiological substrate. The chain is Methylglyoxal reductase DkgA from Escherichia coli (strain K12).